We begin with the raw amino-acid sequence, 449 residues long: Exodeoxyribonuclease 7 large subunit (449 aa).

Belongs to the XseA family. As to quaternary structure, heterooligomer composed of large and small subunits.

The protein resides in the cytoplasm. It catalyses the reaction Exonucleolytic cleavage in either 5'- to 3'- or 3'- to 5'-direction to yield nucleoside 5'-phosphates.. Bidirectionally degrades single-stranded DNA into large acid-insoluble oligonucleotides, which are then degraded further into small acid-soluble oligonucleotides. The sequence is that of Exodeoxyribonuclease 7 large subunit from Latilactobacillus sakei subsp. sakei (strain 23K) (Lactobacillus sakei subsp. sakei).